We begin with the raw amino-acid sequence, 310 residues long: UDP-N-acetylenolpyruvoylglucosamine reductase (310 aa).

The FAD-binding PCMH-type domain maps to 34–211 (TGGPAQCVYV…REDMGKIAQE (178 aa)). Residue Arg177 is part of the active site. Ser225 serves as the catalytic Proton donor. Glu295 is an active-site residue.

Belongs to the MurB family. It depends on FAD as a cofactor.

It localises to the cytoplasm. It carries out the reaction UDP-N-acetyl-alpha-D-muramate + NADP(+) = UDP-N-acetyl-3-O-(1-carboxyvinyl)-alpha-D-glucosamine + NADPH + H(+). It participates in cell wall biogenesis; peptidoglycan biosynthesis. Its function is as follows. Cell wall formation. The polypeptide is UDP-N-acetylenolpyruvoylglucosamine reductase (Beijerinckia indica subsp. indica (strain ATCC 9039 / DSM 1715 / NCIMB 8712)).